The chain runs to 284 residues: MIRLPAVAGAFYEGEEDKLKKQIEWSFLHPLGPGKIPQVPPQKSKRNNLFFIVPHAGYMYSGPVAAHAYYYLASEGIPDTVIILGPNHTGLGSYVSLWPKGKWKTPLGEIEIDEQIAMDLVRESEVIDIDEKAHLYEHSIEVQVPFLQYFFDSKTKIVPIVIMMQTPEISEYLAEGISKIMQKYKDKDIVVIASSDMNHYEPHEKTIEKDNMAIEKILSLDYKGLFNVVEEKDVTACGFGPMMTVLMLAKKFNKKPYVLKHATSGDTSGDKSSVVGYLSVRFGD.

This sequence belongs to the MEMO1 family.

The sequence is that of MEMO1 family protein STK_20620 from Sulfurisphaera tokodaii (strain DSM 16993 / JCM 10545 / NBRC 100140 / 7) (Sulfolobus tokodaii).